Reading from the N-terminus, the 148-residue chain is 3-dehydroquinate dehydratase (148 aa).

The active-site Proton acceptor is the tyrosine 23. Residues asparagine 75, histidine 81, and aspartate 88 each coordinate substrate. The active-site Proton donor is histidine 101. Substrate is bound by residues 102 to 103 (LS) and arginine 112.

The protein belongs to the type-II 3-dehydroquinase family. As to quaternary structure, homododecamer.

The catalysed reaction is 3-dehydroquinate = 3-dehydroshikimate + H2O. The protein operates within metabolic intermediate biosynthesis; chorismate biosynthesis; chorismate from D-erythrose 4-phosphate and phosphoenolpyruvate: step 3/7. Functionally, catalyzes a trans-dehydration via an enolate intermediate. This chain is 3-dehydroquinate dehydratase, found in Xanthomonas campestris pv. campestris (strain B100).